The sequence spans 284 residues: Shikimate dehydrogenase (NADP(+)) (284 aa).

Residues 20–22 and S67 contribute to the shikimate site; that span reads SIS. K71 serves as the catalytic Proton acceptor. D83 serves as a coordination point for NADP(+). Shikimate contacts are provided by N92 and D107. Residues 129–133 and I227 each bind NADP(+); that span reads GAGGA. Residue Y229 coordinates shikimate. NADP(+) is bound at residue G250.

This sequence belongs to the shikimate dehydrogenase family. Homodimer.

The enzyme catalyses shikimate + NADP(+) = 3-dehydroshikimate + NADPH + H(+). Its pathway is metabolic intermediate biosynthesis; chorismate biosynthesis; chorismate from D-erythrose 4-phosphate and phosphoenolpyruvate: step 4/7. Functionally, involved in the biosynthesis of the chorismate, which leads to the biosynthesis of aromatic amino acids. Catalyzes the reversible NADPH linked reduction of 3-dehydroshikimate (DHSA) to yield shikimate (SA). The polypeptide is Shikimate dehydrogenase (NADP(+)) (Streptococcus pneumoniae (strain JJA)).